A 122-amino-acid chain; its full sequence is Small ribosomal subunit protein uS13 (122 aa).

Positions 94–122 are disordered; the sequence is KGLPVRGQRTHTNARTRKGPRRAIAGKKK.

The protein belongs to the universal ribosomal protein uS13 family. In terms of assembly, part of the 30S ribosomal subunit. Forms a loose heterodimer with protein S19. Forms two bridges to the 50S subunit in the 70S ribosome.

Its function is as follows. Located at the top of the head of the 30S subunit, it contacts several helices of the 16S rRNA. In the 70S ribosome it contacts the 23S rRNA (bridge B1a) and protein L5 of the 50S subunit (bridge B1b), connecting the 2 subunits; these bridges are implicated in subunit movement. Contacts the tRNAs in the A and P-sites. This is Small ribosomal subunit protein uS13 from Syntrophus aciditrophicus (strain SB).